Reading from the N-terminus, the 366-residue chain is Chorismate synthase (366 aa).

R48 and R54 together coordinate NADP(+). Residues 132–134, 244–245, G289, 304–308, and R330 each bind FMN; these read RSS, NA, and KPTSS.

Belongs to the chorismate synthase family. Homotetramer. The cofactor is FMNH2.

It catalyses the reaction 5-O-(1-carboxyvinyl)-3-phosphoshikimate = chorismate + phosphate. It participates in metabolic intermediate biosynthesis; chorismate biosynthesis; chorismate from D-erythrose 4-phosphate and phosphoenolpyruvate: step 7/7. Its function is as follows. Catalyzes the anti-1,4-elimination of the C-3 phosphate and the C-6 proR hydrogen from 5-enolpyruvylshikimate-3-phosphate (EPSP) to yield chorismate, which is the branch point compound that serves as the starting substrate for the three terminal pathways of aromatic amino acid biosynthesis. This reaction introduces a second double bond into the aromatic ring system. This Methylorubrum populi (strain ATCC BAA-705 / NCIMB 13946 / BJ001) (Methylobacterium populi) protein is Chorismate synthase.